Consider the following 264-residue polypeptide: 3-methyl-2-oxobutanoate hydroxymethyltransferase (264 aa).

Residues Asp-45 and Asp-84 each contribute to the Mg(2+) site. Residues 45–46 (DS), Asp-84, and Lys-112 contribute to the 3-methyl-2-oxobutanoate site. Residue Glu-114 participates in Mg(2+) binding. Catalysis depends on Glu-181, which acts as the Proton acceptor.

This sequence belongs to the PanB family. Homodecamer; pentamer of dimers. It depends on Mg(2+) as a cofactor.

Its subcellular location is the cytoplasm. It catalyses the reaction 3-methyl-2-oxobutanoate + (6R)-5,10-methylene-5,6,7,8-tetrahydrofolate + H2O = 2-dehydropantoate + (6S)-5,6,7,8-tetrahydrofolate. Its pathway is cofactor biosynthesis; (R)-pantothenate biosynthesis; (R)-pantoate from 3-methyl-2-oxobutanoate: step 1/2. Its function is as follows. Catalyzes the reversible reaction in which hydroxymethyl group from 5,10-methylenetetrahydrofolate is transferred onto alpha-ketoisovalerate to form ketopantoate. The sequence is that of 3-methyl-2-oxobutanoate hydroxymethyltransferase from Escherichia coli O17:K52:H18 (strain UMN026 / ExPEC).